The chain runs to 57 residues: Metallothionein-2 (57 aa).

A beta region spans residues 1–28; sequence PDPCCNDKCDCKEGECKTGCKCTSCRCP. The a divalent metal cation site is built by Cys-4, Cys-5, Cys-9, Cys-11, Cys-16, Cys-20, Cys-22, Cys-25, Cys-27, Cys-30, Cys-33, Cys-37, Cys-39, Cys-45, Cys-49, Cys-53, Cys-55, and Cys-56. Positions 29-57 are alpha; that stretch reads PCEQCSSGCKCANKEDCRKTCSKPCSCCP.

This sequence belongs to the metallothionein superfamily. Type 3 family.

Its function is as follows. Metallothioneins have a high content of cysteine residues that bind various heavy metals. Class I MTS in marine crustacea are involved in the sequestration of elevated levels of heavy-metal ions. In Scylla serrata (Mud crab), this protein is Metallothionein-2.